The sequence spans 427 residues: Adenylosuccinate synthetase (427 aa).

GTP contacts are provided by residues 12-18 (GDEGKGK) and 40-42 (GHT). Asp13 functions as the Proton acceptor in the catalytic mechanism. 2 residues coordinate Mg(2+): Asp13 and Gly40. IMP-binding positions include 13 to 16 (DEGK), 38 to 41 (NAGH), Thr128, Arg142, Gln223, Thr238, and Arg302. His41 serves as the catalytic Proton donor. Residue 298–304 (VTTGRAR) coordinates substrate. GTP is bound by residues Arg304, 330 to 332 (KLD), and 412 to 414 (GVG).

This sequence belongs to the adenylosuccinate synthetase family. Homodimer. Mg(2+) serves as cofactor.

The protein localises to the cytoplasm. The enzyme catalyses IMP + L-aspartate + GTP = N(6)-(1,2-dicarboxyethyl)-AMP + GDP + phosphate + 2 H(+). It functions in the pathway purine metabolism; AMP biosynthesis via de novo pathway; AMP from IMP: step 1/2. Plays an important role in the de novo pathway of purine nucleotide biosynthesis. Catalyzes the first committed step in the biosynthesis of AMP from IMP. This chain is Adenylosuccinate synthetase, found in Parafrankia sp. (strain EAN1pec).